Here is a 335-residue protein sequence, read N- to C-terminus: Ornithine carbamoyltransferase (335 aa).

Residues 56-59 (STRT), Gln-83, Arg-107, and 134-137 (HPTQ) contribute to the carbamoyl phosphate site. L-ornithine contacts are provided by residues Asn-168, Asp-232, and 236 to 237 (SM). Residues 274–275 (CL) and Arg-320 contribute to the carbamoyl phosphate site.

Belongs to the aspartate/ornithine carbamoyltransferase superfamily. OTCase family.

The protein localises to the cytoplasm. It carries out the reaction carbamoyl phosphate + L-ornithine = L-citrulline + phosphate + H(+). It participates in amino-acid biosynthesis; L-arginine biosynthesis; L-arginine from L-ornithine and carbamoyl phosphate: step 1/3. In terms of biological role, reversibly catalyzes the transfer of the carbamoyl group from carbamoyl phosphate (CP) to the N(epsilon) atom of ornithine (ORN) to produce L-citrulline. In Pectobacterium atrosepticum (strain SCRI 1043 / ATCC BAA-672) (Erwinia carotovora subsp. atroseptica), this protein is Ornithine carbamoyltransferase.